The following is a 373-amino-acid chain: Dual-specificity RNA methyltransferase RlmN (373 aa).

The active-site Proton acceptor is the Glu-91. A Radical SAM core domain is found at 97–339 (EDDRGTLCIS…TTVRKTRGDD (243 aa)). A disulfide bond links Cys-104 and Cys-344. Positions 111, 115, and 118 each coordinate [4Fe-4S] cluster. S-adenosyl-L-methionine contacts are provided by residues 165 to 166 (GE), Ser-197, 219 to 221 (SLH), and Asn-301. Residue Cys-344 is the S-methylcysteine intermediate of the active site.

It belongs to the radical SAM superfamily. RlmN family. The cofactor is [4Fe-4S] cluster.

It localises to the cytoplasm. It catalyses the reaction adenosine(2503) in 23S rRNA + 2 reduced [2Fe-2S]-[ferredoxin] + 2 S-adenosyl-L-methionine = 2-methyladenosine(2503) in 23S rRNA + 5'-deoxyadenosine + L-methionine + 2 oxidized [2Fe-2S]-[ferredoxin] + S-adenosyl-L-homocysteine. The enzyme catalyses adenosine(37) in tRNA + 2 reduced [2Fe-2S]-[ferredoxin] + 2 S-adenosyl-L-methionine = 2-methyladenosine(37) in tRNA + 5'-deoxyadenosine + L-methionine + 2 oxidized [2Fe-2S]-[ferredoxin] + S-adenosyl-L-homocysteine. Specifically methylates position 2 of adenine 2503 in 23S rRNA and position 2 of adenine 37 in tRNAs. m2A2503 modification seems to play a crucial role in the proofreading step occurring at the peptidyl transferase center and thus would serve to optimize ribosomal fidelity. This Paracidovorax citrulli (strain AAC00-1) (Acidovorax citrulli) protein is Dual-specificity RNA methyltransferase RlmN.